Reading from the N-terminus, the 313-residue chain is Acetaldehyde dehydrogenase (313 aa).

Residue 13–16 participates in NAD(+) binding; sequence SGNI. Cysteine 133 (acyl-thioester intermediate) is an active-site residue. NAD(+) is bound by residues 164–172 and asparagine 291; that span reads SAGPGTRAN.

This sequence belongs to the acetaldehyde dehydrogenase family.

It catalyses the reaction acetaldehyde + NAD(+) + CoA = acetyl-CoA + NADH + H(+). This chain is Acetaldehyde dehydrogenase, found in Cupriavidus pinatubonensis (strain JMP 134 / LMG 1197) (Cupriavidus necator (strain JMP 134)).